The sequence spans 427 residues: Trigger factor (427 aa).

One can recognise a PPIase FKBP-type domain in the interval 163 to 248; it reads GDTVVIDFVG…IHEVKAKEVP (86 aa).

This sequence belongs to the FKBP-type PPIase family. Tig subfamily.

Its subcellular location is the cytoplasm. It catalyses the reaction [protein]-peptidylproline (omega=180) = [protein]-peptidylproline (omega=0). In terms of biological role, involved in protein export. Acts as a chaperone by maintaining the newly synthesized protein in an open conformation. Functions as a peptidyl-prolyl cis-trans isomerase. In Streptococcus pneumoniae (strain ATCC 700669 / Spain 23F-1), this protein is Trigger factor.